Here is a 291-residue protein sequence, read N- to C-terminus: 2-C-methyl-D-erythritol 4-phosphate cytidylyltransferase (291 aa).

The disordered stretch occupies residues 1-23 (MTERDFDTPVETPTVQPAPAQGA).

The protein belongs to the IspD/TarI cytidylyltransferase family. IspD subfamily.

It catalyses the reaction 2-C-methyl-D-erythritol 4-phosphate + CTP + H(+) = 4-CDP-2-C-methyl-D-erythritol + diphosphate. Its pathway is isoprenoid biosynthesis; isopentenyl diphosphate biosynthesis via DXP pathway; isopentenyl diphosphate from 1-deoxy-D-xylulose 5-phosphate: step 2/6. Catalyzes the formation of 4-diphosphocytidyl-2-C-methyl-D-erythritol from CTP and 2-C-methyl-D-erythritol 4-phosphate (MEP). In Bifidobacterium longum (strain DJO10A), this protein is 2-C-methyl-D-erythritol 4-phosphate cytidylyltransferase.